Here is a 415-residue protein sequence, read N- to C-terminus: U-box domain-containing protein 29 (415 aa).

Residues 11–85 (TVPSFFKCPI…NIWSDSIGRR (75 aa)) enclose the U-box domain. ARM repeat units lie at residues 221-263 (KSKL…TISK) and 265-307 (KRVR…TLSS).

In terms of assembly, binds to SD129 and SD25.

The enzyme catalyses S-ubiquitinyl-[E2 ubiquitin-conjugating enzyme]-L-cysteine + [acceptor protein]-L-lysine = [E2 ubiquitin-conjugating enzyme]-L-cysteine + N(6)-ubiquitinyl-[acceptor protein]-L-lysine.. The protein operates within protein modification; protein ubiquitination. Functions as an E3 ubiquitin ligase. The sequence is that of U-box domain-containing protein 29 (PUB29) from Arabidopsis thaliana (Mouse-ear cress).